The following is an 874-amino-acid chain: Alanine--tRNA ligase (874 aa).

Residues histidine 559, histidine 563, cysteine 661, and histidine 665 each contribute to the Zn(2+) site.

Belongs to the class-II aminoacyl-tRNA synthetase family. Zn(2+) is required as a cofactor.

It is found in the cytoplasm. It carries out the reaction tRNA(Ala) + L-alanine + ATP = L-alanyl-tRNA(Ala) + AMP + diphosphate. Its function is as follows. Catalyzes the attachment of alanine to tRNA(Ala) in a two-step reaction: alanine is first activated by ATP to form Ala-AMP and then transferred to the acceptor end of tRNA(Ala). Also edits incorrectly charged Ser-tRNA(Ala) and Gly-tRNA(Ala) via its editing domain. The chain is Alanine--tRNA ligase from Microcystis aeruginosa (strain NIES-843 / IAM M-2473).